The primary structure comprises 157 residues: Peroxiredoxin Bcp (157 aa).

Residues 3–156 form the Thioredoxin domain; the sequence is IEIGQKAPDL…ALQTLKDMSE (154 aa). Cys-45 acts as the Cysteine sulfenic acid (-SOH) intermediate in catalysis. Cysteines 45 and 50 form a disulfide.

It belongs to the peroxiredoxin family. BCP/PrxQ subfamily. As to quaternary structure, monomer.

The catalysed reaction is a hydroperoxide + [thioredoxin]-dithiol = an alcohol + [thioredoxin]-disulfide + H2O. In terms of biological role, thiol-specific peroxidase that catalyzes the reduction of hydrogen peroxide and organic hydroperoxides to water and alcohols, respectively. Plays a role in cell protection against oxidative stress by detoxifying peroxides and as sensor of hydrogen peroxide-mediated signaling events. This is Peroxiredoxin Bcp (ygaF) from Bacillus subtilis (strain 168).